Consider the following 341-residue polypeptide: Binder of USO1 and GRH1 protein 1 (341 aa).

Positions 1-181 (MSEQESDEVK…AADDLFANDG (181 aa)) are disordered. Serine 2 carries the N-acetylserine modification. The stretch at 2 to 41 (SEQESDEVKRMKQLEEARKRVEELKKKKNKKNKGKKNKNS) forms a coiled coil. The segment covering 7-26 (DEVKRMKQLEEARKRVEELK) has biased composition (basic and acidic residues). Residues 27 to 39 (KKKNKKNKGKKNK) are compositionally biased toward basic residues. Positions 69–78 (KANSTKSENN) are enriched in polar residues. Residues 79–91 (DQNDVDEESEEKE) show a composition bias toward acidic residues. Phosphoserine is present on serine 87. Over residues 118-132 (GKDDAENTKKEEVQE) the composition is skewed to basic and acidic residues. A compositionally biased stretch (polar residues) spans 158–171 (VQTQEGNEPSNTSE). Serine 170 is subject to Phosphoserine. Positions 188-272 (LTTIKKQKEE…LKLAEAKAAR (85 aa)) form a coiled coil. Position 292 is a phosphothreonine (threonine 292).

In terms of assembly, interacts with GRH1 (via C-terminus), probably forming a heterooligomer consisting of a GRH1 dimer and a BUG1 dimer.

The protein resides in the cytoplasm. It localises to the golgi apparatus. The protein localises to the cis-Golgi network membrane. Functionally, involved in ER to Golgi vesicle-mediated transport by either facilitating USO1-dependent and -independent tethering or increasing target accuracy of fusion events of COPII-coated vesicles. The protein is Binder of USO1 and GRH1 protein 1 of Saccharomyces cerevisiae (strain ATCC 204508 / S288c) (Baker's yeast).